A 344-amino-acid chain; its full sequence is CRISPR-associated endonuclease Cas1 2 (344 aa).

Mn(2+) is bound by residues glutamate 167, histidine 235, and glutamate 250.

The protein belongs to the CRISPR-associated endonuclease Cas1 family. Homodimer, forms a heterotetramer with a Cas2 homodimer. The cofactor is Mg(2+). Mn(2+) is required as a cofactor.

In terms of biological role, CRISPR (clustered regularly interspaced short palindromic repeat), is an adaptive immune system that provides protection against mobile genetic elements (viruses, transposable elements and conjugative plasmids). CRISPR clusters contain spacers, sequences complementary to antecedent mobile elements, and target invading nucleic acids. CRISPR clusters are transcribed and processed into CRISPR RNA (crRNA). Acts as a dsDNA endonuclease. Involved in the integration of spacer DNA into the CRISPR cassette. The chain is CRISPR-associated endonuclease Cas1 2 from Rhodospirillum rubrum (strain ATCC 11170 / ATH 1.1.1 / DSM 467 / LMG 4362 / NCIMB 8255 / S1).